The following is a 152-amino-acid chain: RxLR effector protein Avrblb1 (152 aa).

Positions 1-24 (MRSLLLTVLLNLVVLLATTGAVSS) are cleaved as a signal peptide. Residues 51 to 72 (RSLRGDYNNEVTKEPNTSDEER) carry the RxLR-dEER motif. The RGD RLK-binding motif signature appears at 54-56 (RGD). A glycan (N-linked (GlcNAc...) asparagine) is linked at N66. Residues 99–152 (QSKTVLRYEDKLFTALYKSGETPRSLRTKHLDKASASVFFNRFKKWYDKNVGPS) are w motif.

This sequence belongs to the RxLR effector family. As to quaternary structure, interacts with host defense protein RGA2/Rpi-blb1. Interacts with host legume-type lectin receptor kinase LECRK19.

Its subcellular location is the secreted. It localises to the host nucleus. It is found in the host nucleolus. The protein resides in the host cell membrane. Secreted effector that acts as an elicitor of hypersensitive response (HR) specifically on plants carrying defense protein RGA2/Rpi-blb1. Enhances P.infestans colonization of plant hosts Nicotiana benthamiana and potato Solanum bulbocastanum leaves. Associates with host legume-type lectin receptor kinases and disrupts attachments between the host plasma membrane and cell wall. This is RxLR effector protein Avrblb1 from Phytophthora infestans (strain T30-4) (Potato late blight agent).